Here is a 354-residue protein sequence, read N- to C-terminus: Uroporphyrinogen decarboxylase (354 aa).

Substrate-binding positions include 27–31, aspartate 77, tyrosine 154, threonine 209, and histidine 327; that span reads RQAGR.

It belongs to the uroporphyrinogen decarboxylase family. In terms of assembly, homodimer.

Its subcellular location is the cytoplasm. It carries out the reaction uroporphyrinogen III + 4 H(+) = coproporphyrinogen III + 4 CO2. It participates in porphyrin-containing compound metabolism; protoporphyrin-IX biosynthesis; coproporphyrinogen-III from 5-aminolevulinate: step 4/4. In terms of biological role, catalyzes the decarboxylation of four acetate groups of uroporphyrinogen-III to yield coproporphyrinogen-III. This chain is Uroporphyrinogen decarboxylase, found in Cronobacter sakazakii (strain ATCC BAA-894) (Enterobacter sakazakii).